We begin with the raw amino-acid sequence, 519 residues long: Exodeoxyribonuclease 7 large subunit (519 aa).

The disordered stretch occupies residues Val-500–Leu-519.

It belongs to the XseA family. As to quaternary structure, heterooligomer composed of large and small subunits.

Its subcellular location is the cytoplasm. The catalysed reaction is Exonucleolytic cleavage in either 5'- to 3'- or 3'- to 5'-direction to yield nucleoside 5'-phosphates.. Bidirectionally degrades single-stranded DNA into large acid-insoluble oligonucleotides, which are then degraded further into small acid-soluble oligonucleotides. The chain is Exodeoxyribonuclease 7 large subunit from Cereibacter sphaeroides (strain ATCC 17029 / ATH 2.4.9) (Rhodobacter sphaeroides).